The following is a 557-amino-acid chain: uncharacterized protein (557 aa).

The signal sequence occupies residues 1-30; the sequence is MAPRRRRHTRIAGLRVVGTATLVAATTLTA. Residue C31 is the site of N-palmitoyl cysteine attachment. Residue C31 is the site of S-diacylglycerol cysteine attachment.

It to M.bovis Mb2616c and M.leprae ML0489.

The protein localises to the cell membrane. This is an uncharacterized protein from Mycobacterium tuberculosis (strain ATCC 25618 / H37Rv).